An 84-amino-acid polypeptide reads, in one-letter code: Carboxysome shell vertex protein CsoS4B (84 aa).

The BMV domain maps to 1 to 77 (MQILQVKKQL…TDLTVGGIID (77 aa)).

Belongs to the CcmL/EutN family. CsoS4 subfamily. Homopentamer.

The protein resides in the carboxysome. Probably forms vertices in the carboxysome, a polyhedral inclusion where RuBisCO (ribulose bisphosphate carboxylase, cbbL-cbbS) is sequestered. Has been modeled to induce curvature upon insertion into an otherwise flat hexagonal layer of major carboxysome subunits. This chain is Carboxysome shell vertex protein CsoS4B, found in Hydrogenovibrio crunogenus (strain DSM 25203 / XCL-2) (Thiomicrospira crunogena).